Consider the following 327-residue polypeptide: DNA-directed RNA polymerase subunit alpha (327 aa).

The segment at 1 to 231 is alpha N-terminal domain (alpha-NTD); sequence MIYQMQMPAK…DHVLLFADFS (231 aa). Positions 247–327 are alpha C-terminal domain (alpha-CTD); that stretch reads DEFETMRRLL…GMDITRYQMK (81 aa).

This sequence belongs to the RNA polymerase alpha chain family. As to quaternary structure, homodimer. The RNAP catalytic core consists of 2 alpha, 1 beta, 1 beta' and 1 omega subunit. When a sigma factor is associated with the core the holoenzyme is formed, which can initiate transcription.

The catalysed reaction is RNA(n) + a ribonucleoside 5'-triphosphate = RNA(n+1) + diphosphate. Its function is as follows. DNA-dependent RNA polymerase catalyzes the transcription of DNA into RNA using the four ribonucleoside triphosphates as substrates. This is DNA-directed RNA polymerase subunit alpha from Chlorobium chlorochromatii (strain CaD3).